We begin with the raw amino-acid sequence, 272 residues long: HMP-PP phosphatase (272 aa).

Asp8 acts as the Nucleophile in catalysis. Residues Asp8, Asp10, and Asp212 each coordinate Mg(2+).

This sequence belongs to the HAD-like hydrolase superfamily. Cof family. Mg(2+) is required as a cofactor.

It carries out the reaction 4-amino-2-methyl-5-(diphosphooxymethyl)pyrimidine + H2O = 4-amino-2-methyl-5-(phosphooxymethyl)pyrimidine + phosphate + H(+). Functionally, catalyzes the hydrolysis of 4-amino-2-methyl-5-hydroxymethylpyrimidine pyrophosphate (HMP-PP) to 4-amino-2-methyl-5-hydroxymethylpyrimidine phosphate (HMP-P). This Salmonella typhi protein is HMP-PP phosphatase.